The following is a 309-amino-acid chain: Cytochrome c biogenesis protein CcsA (309 aa).

8 consecutive transmembrane segments (helical) span residues 18 to 38 (LGLL…GAFF), 43 to 63 (FFIV…QLLF), 67 to 87 (ISGH…TWGI), 102 to 122 (IIPS…CFVL), 148 to 168 (VMLS…VLFI), 216 to 236 (SILI…VWAN), 250 to 267 (TWAF…HMRI), and 279 to 299 (LATT…FLGI).

Belongs to the CcmF/CycK/Ccl1/NrfE/CcsA family. In terms of assembly, may interact with ccs1.

It is found in the cellular thylakoid membrane. Required during biogenesis of c-type cytochromes (cytochrome c6 and cytochrome f) at the step of heme attachment. The chain is Cytochrome c biogenesis protein CcsA from Prochlorococcus marinus (strain MIT 9215).